A 100-amino-acid polypeptide reads, in one-letter code: Mitochondrial import inner membrane translocase subunit Tim10 B (100 aa).

Residues 25–49 (CFQRCVPSLHHRALDAEEEACLHSC) carry the Twin CX3C motif motif. 2 disulfide bridges follow: Cys-25/Cys-49 and Cys-29/Cys-45.

It belongs to the small Tim family. Component of the TIM22 complex, which core is composed of TIMM22, associated with TIMM10 (TIMM10A and/or TIMM10B), TIMM9, AGK and TIMM29.

It localises to the mitochondrion inner membrane. Its function is as follows. Component of the TIM22 complex, a complex that mediates the import and insertion of multi-pass transmembrane proteins into the mitochondrial inner membrane. The TIM22 complex forms a twin-pore translocase that uses the membrane potential as the external driving force. In the TIM22 complex, it may act as a docking point for the soluble 70 kDa complex that guides the target proteins in transit through the aqueous mitochondrial intermembrane space. The chain is Mitochondrial import inner membrane translocase subunit Tim10 B (Timm10b) from Mus musculus (Mouse).